The following is a 500-amino-acid chain: Na(+)/H(+) antiporter NhaB (500 aa).

The next 12 helical transmembrane spans lie at 28–50, 68–88, 98–118, 121–141, 145–165, 205–225, 244–264, 301–318, 350–370, 394–414, 449–469, and 477–497; these read FLLSNPLLLWLAGPTVAAWVLVG, GGLLVLEALLLGLASPEALYA, LLLMFMVAGIYFMKDLLLLLF, LLLGVRSKTLLSLLFCLLAAL, FLDALTVTAVVISVAVAFFAV, LLMHAAVGTALGGVCTLVGEP, QVAPVSMPVLAAGLLTCVALE, ALLVQALAALVLMIGLAL, FQEALPFTALLVAFFAVVAVI, MLFIANGLLSAISDNVFVATI, VATPNGQAAFLFLLTSSIAPL, and MVWMALPYTLVMGGLGWWAVS.

Belongs to the NhaB Na(+)/H(+) (TC 2.A.34) antiporter family.

The protein resides in the cell inner membrane. The catalysed reaction is 2 Na(+)(in) + 3 H(+)(out) = 2 Na(+)(out) + 3 H(+)(in). In terms of biological role, na(+)/H(+) antiporter that extrudes sodium in exchange for external protons. The sequence is that of Na(+)/H(+) antiporter NhaB from Pseudomonas paraeruginosa (strain DSM 24068 / PA7) (Pseudomonas aeruginosa (strain PA7)).